Reading from the N-terminus, the 484-residue chain is Cysteine--tRNA ligase (484 aa).

Position 29 (C29) interacts with Zn(2+). A 'HIGH' region motif is present at residues 31–41 (PTVQSAPHIGH). Positions 219, 244, and 248 each coordinate Zn(2+). Positions 275–279 (KMSKS) match the 'KMSKS' region motif. K278 is a binding site for ATP.

It belongs to the class-I aminoacyl-tRNA synthetase family. As to quaternary structure, monomer. Requires Zn(2+) as cofactor.

The protein resides in the cytoplasm. It catalyses the reaction tRNA(Cys) + L-cysteine + ATP = L-cysteinyl-tRNA(Cys) + AMP + diphosphate. The polypeptide is Cysteine--tRNA ligase (Clavibacter michiganensis subsp. michiganensis (strain NCPPB 382)).